Reading from the N-terminus, the 336-residue chain is Dihydroorotate dehydrogenase (quinone) (336 aa).

Residues 62–66 (AGLDK) and Thr-86 each bind FMN. Position 66 (Lys-66) interacts with substrate. 111-115 (NRMGF) is a binding site for substrate. 2 residues coordinate FMN: Asn-139 and Asn-172. Asn-172 serves as a coordination point for substrate. The active-site Nucleophile is the Ser-175. Asn-177 provides a ligand contact to substrate. Positions 217 and 245 each coordinate FMN. 246 to 247 (NT) contributes to the substrate binding site. FMN is bound by residues Gly-268, Gly-297, and 318–319 (YS).

The protein belongs to the dihydroorotate dehydrogenase family. Type 2 subfamily. As to quaternary structure, monomer. It depends on FMN as a cofactor.

It localises to the cell membrane. The catalysed reaction is (S)-dihydroorotate + a quinone = orotate + a quinol. The protein operates within pyrimidine metabolism; UMP biosynthesis via de novo pathway; orotate from (S)-dihydroorotate (quinone route): step 1/1. Functionally, catalyzes the conversion of dihydroorotate to orotate with quinone as electron acceptor. The sequence is that of Dihydroorotate dehydrogenase (quinone) from Vibrio vulnificus (strain CMCP6).